Consider the following 350-residue polypeptide: Phosphotriesterase-related protein (350 aa).

Residues His-22, His-24, Glu-169, His-201, His-230, and Asp-298 each contribute to the a divalent metal cation site.

The protein belongs to the metallo-dependent hydrolases superfamily. Phosphotriesterase family. A divalent metal cation serves as cofactor.

This is Phosphotriesterase-related protein from Drosophila yakuba (Fruit fly).